Here is a 987-residue protein sequence, read N- to C-terminus: UPF0182 protein DIP0733 (987 aa).

7 helical membrane passes run 19–39 (LTWL…VVDL), 63–83 (IGLF…AGWF), 115–135 (FLVV…QQAW), 176–196 (SVLL…LGGI), 212–234 (YAKV…SYWL), 261–281 (AKIV…SVIV), and 290–310 (ISTV…PIMM). A compositionally biased stretch (basic and acidic residues) spans 904–927 (DLGEAKGLKPESQNRDKPEDKEGK). The interval 904–950 (DLGEAKGLKPESQNRDKPEDKEGKAPSTPSAPASGSGTTGEAIGKIN) is disordered. Residues 928-943 (APSTPSAPASGSGTTG) show a composition bias toward low complexity.

It belongs to the UPF0182 family.

The protein localises to the cell membrane. This chain is UPF0182 protein DIP0733, found in Corynebacterium diphtheriae (strain ATCC 700971 / NCTC 13129 / Biotype gravis).